The sequence spans 291 residues: Oxidative stress-responsive serine-rich protein 1 (291 aa).

The interval 29–139 (ISLSVGEGPS…NAGENSTSLD (111 aa)) is disordered. Basic residues predominate over residues 65–83 (STRKSSRGAVRTQRRRRSK). The segment covering 95 to 105 (CSTTAPPSSSQ) has biased composition (polar residues). Thr143 carries the post-translational modification Phosphothreonine.

The protein is Oxidative stress-responsive serine-rich protein 1 (Oser1) of Mus musculus (Mouse).